The sequence spans 242 residues: tRNA (guanine-N(1)-)-methyltransferase (242 aa).

S-adenosyl-L-methionine is bound by residues Gly112 and 131–136 (LGDFIL).

The protein belongs to the RNA methyltransferase TrmD family. In terms of assembly, homodimer.

The protein localises to the cytoplasm. It catalyses the reaction guanosine(37) in tRNA + S-adenosyl-L-methionine = N(1)-methylguanosine(37) in tRNA + S-adenosyl-L-homocysteine + H(+). In terms of biological role, specifically methylates guanosine-37 in various tRNAs. The chain is tRNA (guanine-N(1)-)-methyltransferase from Crocosphaera subtropica (strain ATCC 51142 / BH68) (Cyanothece sp. (strain ATCC 51142)).